Consider the following 319-residue polypeptide: rRNA adenine N-6-methyltransferase (319 aa).

The tract at residues M1 to A59 is disordered. The segment covering R26 to P41 has biased composition (basic and acidic residues). Residues N66, L68, G93, E114, D141, and N157 each coordinate S-adenosyl-L-methionine.

Belongs to the class I-like SAM-binding methyltransferase superfamily. rRNA adenine N(6)-methyltransferase family.

The enzyme catalyses adenosine(2085) in 23S rRNA + 2 S-adenosyl-L-methionine = N(6)-dimethyladenosine(2085) in 23S rRNA + 2 S-adenosyl-L-homocysteine + 2 H(+). In terms of biological role, this protein produces a dimethylation of the adenine residue at position 2085 in 23S rRNA, resulting in reduced affinity between ribosomes and macrolide-lincosamide-streptogramin B antibiotics. The protein is rRNA adenine N-6-methyltransferase (ermSF) of Streptomyces fradiae (Streptomyces roseoflavus).